A 1013-amino-acid polypeptide reads, in one-letter code: MDIS1-interacting receptor like kinase 1 (1013 aa).

The signal sequence occupies residues 1–23 (MKMKIIVLFLYYCYIGSTSSVLA). Topologically, residues 24–633 (SIDNVNELSV…SSHSSLHGKR (610 aa)) are extracellular. N-linked (GlcNAc...) asparagine glycans are attached at residues N61, N82, N101, N137, N146, N151, and N155. LRR repeat units follow at residues 70–94 (NGNV…ISQL), 95–117 (SSLV…SIPP), 119–137 (KSID…LFSN), 139–163 (SLGL…LGNL), 164–186 (VSLE…SFKN), 187–213 (LQKL…QLPS), 215–234 (ETAI…EFGN), 235–259 (INSL…LGKL), 260–283 (KSLE…IGSI), 284–307 (TTLK…ITKL), 308–331 (KNLQ…ISSL), 333–355 (QLQV…LGKN), 357–379 (PLQW…LCNK), 381–403 (NLTK…LSTC), 405–426 (SLVR…GFGK), 427–451 (LEKL…ISDS), 453–475 (SLSF…ILSI), 477–498 (NLQA…QFQD), 499–523 (CPSL…IASC), 525–547 (KLVS…ITTM), 548–571 (SALA…IGTS), and 573–595 (ALEL…GFLK). The N-linked (GlcNAc...) asparagine glycan is linked to N199. N-linked (GlcNAc...) asparagine glycosylation is present at N271. An N-linked (GlcNAc...) asparagine glycan is attached at N341. N381, N389, and N417 each carry an N-linked (GlcNAc...) asparagine glycan. 3 N-linked (GlcNAc...) asparagine glycosylation sites follow: N535, N557, and N578. Residues 634–654 (IVAGWLIGIASVLALGILTIV) form a helical membrane-spanning segment. Topologically, residues 655 to 1013 (TRTLYKKWYS…FSTSPVNGLL (359 aa)) are cytoplasmic. The residue at position 691 (T691) is a Phosphothreonine. The 285-residue stretch at 699–983 (IKESNMIGMG…SMLGEAKPRR (285 aa)) folds into the Protein kinase domain. ATP is bound by residues 705–713 (IGMGATGIV) and K728. T710 is subject to Phosphothreonine; by autocatalysis. A phosphothreonine; by autocatalysis mark is found at T741 and T742. Phosphotyrosine is present on residues Y777 and Y818. The Proton acceptor role is filled by D831. T862 is modified (phosphothreonine; by autocatalysis). S864 carries the phosphoserine; by autocatalysis modification. Y872 is subject to Phosphotyrosine. Y879 carries the phosphotyrosine; by autocatalysis modification. T880 and T992 each carry phosphothreonine; by autocatalysis. Positions 976 to 1013 (LGEAKPRRKSNSNEENTSRSLAEKHSSVFSTSPVNGLL) are disordered. A compositionally biased stretch (polar residues) spans 1002–1013 (SVFSTSPVNGLL).

The protein belongs to the protein kinase superfamily. Ser/Thr protein kinase family. Homodimer. Interacts with MDIS1 and LURE1.2. Autophosphorylation induced by the interaction with LURE1.2. As to expression, expressed in pollen tubes.

It is found in the cell membrane. It catalyses the reaction L-seryl-[protein] + ATP = O-phospho-L-seryl-[protein] + ADP + H(+). It carries out the reaction L-threonyl-[protein] + ATP = O-phospho-L-threonyl-[protein] + ADP + H(+). Involved in the regulation of procambium maintenance and polarity during vascular-tissue development. Involved in the pollen tube perception of the female signal. Phosphorylates MDSI1. In Arabidopsis thaliana (Mouse-ear cress), this protein is MDIS1-interacting receptor like kinase 1.